We begin with the raw amino-acid sequence, 197 residues long: Probable UbiX-like flavin prenyltransferase (197 aa).

Residues 9–11 (GAT), Ser36, 87–90 (SMKT), and Arg122 each bind FMN.

It belongs to the UbiX/PAD1 family. YclB subfamily. Homododecamer.

The enzyme catalyses dimethylallyl phosphate + FMNH2 = prenylated FMNH2 + phosphate. Functionally, involved in the non-oxidative decarboxylation and detoxification of phenolic derivatives under both aerobic and anaerobic conditions. Flavin prenyltransferase that catalyzes the synthesis of the prenylated FMN cofactor (prenyl-FMN) for phenolic acid decarboxylase. This Escherichia coli O157:H7 protein is Probable UbiX-like flavin prenyltransferase.